Reading from the N-terminus, the 681-residue chain is UvrABC system protein C (681 aa).

Residues Met-1–Ala-23 are disordered. Acidic residues predominate over residues Asp-14–Ala-23. The 79-residue stretch at Asn-67–Val-145 folds into the GIY-YIG domain. In terms of domain architecture, UVR spans Gln-255–Val-290.

It belongs to the UvrC family. Interacts with UvrB in an incision complex.

Its subcellular location is the cytoplasm. The UvrABC repair system catalyzes the recognition and processing of DNA lesions. UvrC both incises the 5' and 3' sides of the lesion. The N-terminal half is responsible for the 3' incision and the C-terminal half is responsible for the 5' incision. The sequence is that of UvrABC system protein C from Agrobacterium fabrum (strain C58 / ATCC 33970) (Agrobacterium tumefaciens (strain C58)).